Consider the following 814-residue polypeptide: Ubiquitin carboxyl-terminal hydrolase 45 (814 aa).

A compositionally biased stretch (basic and acidic residues) spans 1–14 (MRVKDPTKALPEKA). The segment at 1-28 (MRVKDPTKALPEKAKRSKRPTVPHDEDS) is disordered. The tract at residues 1 to 62 (MRVKDPTKAL…AIAENLWSVC (62 aa)) is interaction with ERCC1. Residues Ser28 and Ser29 each carry the phosphoserine modification. The UBP-type zinc finger occupies 36–153 (LTCQHVSHAI…AQIVDFLQKH (118 aa)). 12 residues coordinate Zn(2+): Cys38, His40, Cys62, Cys65, Cys85, Cys88, Cys93, His101, His105, His114, Cys127, and Cys130. The USP domain occupies 190–813 (RGITNLGNTC…QAYLLFYERV (624 aa)). Residue Cys199 is the Nucleophile of the active site. Disordered regions lie at residues 418 to 443 (IENI…IHDR) and 479 to 533 (ESRL…PDGP). Residues 432–443 (SSKDKSQLIHDR) are compositionally biased toward basic and acidic residues. Phosphoserine is present on residues Ser508 and Ser526. The span at 515–527 (KQTGLFRSSSGSG) shows a compositional bias: polar residues. The Proton acceptor role is filled by His746.

It belongs to the peptidase C19 family. In terms of assembly, interacts with ERCC1. The catalytically active form interacts with SPDL1. As to expression, widely expressed. High expression is detected in the cerebellum. In the eye, it is expressed at high levels in the optic nerve, sclera and retina, with relatively low levels in the choroid, lens and retinal pigment epithelium.

It is found in the photoreceptor inner segment. The protein resides in the cytoplasm. It localises to the nucleus. The enzyme catalyses Thiol-dependent hydrolysis of ester, thioester, amide, peptide and isopeptide bonds formed by the C-terminal Gly of ubiquitin (a 76-residue protein attached to proteins as an intracellular targeting signal).. Its function is as follows. Catalyzes the deubiquitination of SPDL1. Plays a role in the repair of UV-induced DNA damage via deubiquitination of ERCC1, promoting its recruitment to DNA damage sites. May be involved in the maintenance of photoreceptor function. May play a role in normal retinal development. Plays a role in cell migration. This is Ubiquitin carboxyl-terminal hydrolase 45 (USP45) from Homo sapiens (Human).